A 376-amino-acid polypeptide reads, in one-letter code: Probable dual-specificity RNA methyltransferase RlmN (376 aa).

Glu-96 functions as the Proton acceptor in the catalytic mechanism. The Radical SAM core domain maps to 102 to 346 (YPDRSTVCVS…CTVRVERGVE (245 aa)). A disulfide bond links Cys-109 and Cys-351. Residues Cys-116, Cys-120, and Cys-123 each coordinate [4Fe-4S] cluster. S-adenosyl-L-methionine-binding positions include 171–172 (GE), Ser-203, 226–228 (SLH), and Asn-308. Cys-351 acts as the S-methylcysteine intermediate in catalysis.

It belongs to the radical SAM superfamily. RlmN family. It depends on [4Fe-4S] cluster as a cofactor.

The protein resides in the cytoplasm. It carries out the reaction adenosine(2503) in 23S rRNA + 2 reduced [2Fe-2S]-[ferredoxin] + 2 S-adenosyl-L-methionine = 2-methyladenosine(2503) in 23S rRNA + 5'-deoxyadenosine + L-methionine + 2 oxidized [2Fe-2S]-[ferredoxin] + S-adenosyl-L-homocysteine. The catalysed reaction is adenosine(37) in tRNA + 2 reduced [2Fe-2S]-[ferredoxin] + 2 S-adenosyl-L-methionine = 2-methyladenosine(37) in tRNA + 5'-deoxyadenosine + L-methionine + 2 oxidized [2Fe-2S]-[ferredoxin] + S-adenosyl-L-homocysteine. In terms of biological role, specifically methylates position 2 of adenine 2503 in 23S rRNA and position 2 of adenine 37 in tRNAs. The protein is Probable dual-specificity RNA methyltransferase RlmN of Chloroflexus aurantiacus (strain ATCC 29366 / DSM 635 / J-10-fl).